The sequence spans 364 residues: Cell cycle control protein 50A (364 aa).

The tract at residues 1–28 is disordered; sequence MAMNYSAKDEVDGGPAGPPGGAAKTRRP. An N-acetylalanine modification is found at Ala-2. Topologically, residues 2–49 are cytoplasmic; sequence AMNYSAKDEVDGGPAGPPGGAAKTRRPDNTAFKQQRLPAWQPILTAGT. A helical membrane pass occupies residues 50 to 70; the sequence is VLPTFFIIGLIFIPIGIGIFV. Topologically, residues 71–328 are exoplasmic loop; the sequence is TSNNIREIEI…SWMGGKNPFL (258 aa). 3 cysteine pairs are disulfide-bonded: Cys-91–Cys-104, Cys-94–Cys-102, and Cys-157–Cys-171. The N-linked (GlcNAc...) asparagine glycan is linked to Asn-98. Asn-297 carries an N-linked (GlcNAc...) asparagine glycan. A helical membrane pass occupies residues 329-349; sequence GIAYITIGSISFLLGVVLLVI. Residues 350 to 364 are Cytoplasmic-facing; sequence NHKYRNSSNTADITI.

This sequence belongs to the CDC50/LEM3 family. As to quaternary structure, component of various P4-ATPase flippase complexes which consists of a catalytic alpha subunit and an accessory beta subunit. Interacts with ATP8A1 to form a flippase complex; this complex forms an intermediate phosphoenzyme. The ATP8A2:TMEM30A flippase complex has been purified, and ATP8B1:TMEM30A and ATP8B2:TMEM30A flippase complexes have been shown to form intermediate phosphoenzymes in vitro. Interacts with alpha subunits ATP8A1, ATP8B1, ATP8B2, ATP8B4, ATP10A, ATP10B, ATP10D, ATP11A, ATP11B and ATP11C. Post-translationally, N-glycosylated. Contains high mannose-type oligosaccharides. Expressed in photoreceptor cells; detected in retina outer segment (at protein level). Detected in hepatocytes liver sinusoidal endothelial cells and kidney brush border of the proximal tubules (at protein level). Expressed in brain (at protein level).

The protein localises to the membrane. Its subcellular location is the cell membrane. It localises to the golgi apparatus. It is found in the cytoplasmic vesicle. The protein resides in the secretory vesicle membrane. The protein localises to the apical cell membrane. Its function is as follows. Accessory component of a P4-ATPase flippase complex which catalyzes the hydrolysis of ATP coupled to the transport of aminophospholipids from the outer to the inner leaflet of various membranes and ensures the maintenance of asymmetric distribution of phospholipids. Phospholipid translocation also seems to be implicated in vesicle formation and in uptake of lipid signaling molecules. The beta subunit may assist in binding of the phospholipid substrate. Required for the proper folding, assembly and ER to Golgi exit of the ATP8A2:TMEM30A flippase complex. ATP8A2:TMEM30A may be involved in regulation of neurite outgrowth, and, reconstituted to liposomes, predomiminantly transports phosphatidylserine (PS) and to a lesser extent phosphatidylethanolamine (PE). The ATP8A1:TMEM30A flippase complex seems to play a role in regulation of cell migration probably involving flippase-mediated translocation of phosphatidylethanolamine (PE) at the plasma membrane. Required for the formation of the ATP8A2, ATP8B1 and ATP8B2 P-type ATPAse intermediate phosphoenzymes. Involved in uptake of platelet-activating factor (PAF). Can also mediate the export of alpha subunits ATP8A1, ATP8B1, ATP8B2, ATP8B4, ATP10A, ATP10B, ATP10D, ATP11A, ATP11B and ATP11C from the ER to other membrane localizations. The polypeptide is Cell cycle control protein 50A (Mus musculus (Mouse)).